We begin with the raw amino-acid sequence, 392 residues long: uncharacterized protein (392 aa).

The N-terminal stretch at 1–23 (MWTALVLVWISSVLLPRSHMMSA) is a signal peptide. The Extracellular segment spans residues 24-342 (EPRNIVTNKW…DALTPSLVNK (319 aa)). The N-linked (GlcNAc...) asparagine glycan is linked to asparagine 77. Disordered regions lie at residues 83-154 (AEVT…PRTA) and 167-320 (AAGT…TDSC). The segment covering 86-97 (TTHGTNTSTPTT) has biased composition (low complexity). Composition is skewed to polar residues over residues 107-127 (SRTLAVPTSSGPSSAEQTRPT) and 170-249 (TVNT…SAST). A glycan (N-linked (GlcNAc...) asparagine) is linked at asparagine 172. 2 stretches are compositionally biased toward low complexity: residues 265 to 277 (SPTTQPSPTLPTQ) and 284 to 309 (TLLTTEQVGTKTTSGTASAGPTSRSS). The chain crosses the membrane as a helical span at residues 343–363 (MLLLVVLLVGVTLFIAVLVMF). The Cytoplasmic portion of the chain corresponds to 364–392 (ALQAYESYKKKDYTQVDYLINGMYADSEM).

The protein localises to the cell membrane. It localises to the golgi apparatus. The protein resides in the trans-Golgi network membrane. This is an uncharacterized protein from Mus musculus (Mouse).